The sequence spans 172 residues: Translation initiation factor IF-3 (172 aa).

Belongs to the IF-3 family. As to quaternary structure, monomer.

Its subcellular location is the cytoplasm. IF-3 binds to the 30S ribosomal subunit and shifts the equilibrium between 70S ribosomes and their 50S and 30S subunits in favor of the free subunits, thus enhancing the availability of 30S subunits on which protein synthesis initiation begins. The sequence is that of Translation initiation factor IF-3 from Campylobacter jejuni subsp. jejuni serotype O:6 (strain 81116 / NCTC 11828).